The primary structure comprises 345 residues: Isocitrate lyase (345 aa).

Substrate is bound at residue 58–60 (SGY). Asp98 contributes to the Mg(2+) binding site. The active-site Proton acceptor is the Cys135. Substrate-binding positions include 136 to 137 (GH), Arg170, 230 to 234 (NYSSS), and Thr260. The tract at residues 318-345 (DPEARRRIEESEGFSEEQADPITSNDDD) is disordered. The segment covering 328–345 (SEGFSEEQADPITSNDDD) has biased composition (acidic residues).

In terms of assembly, homotetramer or homotrimer. The cofactor is Mg(2+).

The catalysed reaction is D-threo-isocitrate = glyoxylate + succinate. Its pathway is carbohydrate metabolism; glyoxylate cycle; (S)-malate from isocitrate: step 1/2. Its function is as follows. Involved in the metabolic adaptation in response to environmental changes. Catalyzes the reversible formation of succinate and glyoxylate from isocitrate, a key step of the glyoxylate cycle, which operates as an anaplerotic route for replenishing the tricarboxylic acid cycle during growth on fatty acid substrates. This Haloferax volcanii (strain ATCC 29605 / DSM 3757 / JCM 8879 / NBRC 14742 / NCIMB 2012 / VKM B-1768 / DS2) (Halobacterium volcanii) protein is Isocitrate lyase (aceA).